We begin with the raw amino-acid sequence, 99 residues long: High mobility group nucleosome-binding domain-containing protein 3 (99 aa).

3 stretches are compositionally biased toward basic and acidic residues: residues 1–25 (MPKRKSPENTEDKDGSKVTKQEPTR), 39–53 (PEPKPRKTSAKKEPG), and 62–72 (GKKEEKQEAGK). The disordered stretch occupies residues 1–99 (MPKRKSPENT…KTESVDNEGE (99 aa)). Position 6 is a phosphoserine (Ser-6). Thr-10 bears the Phosphothreonine mark. 2 positions are modified to phosphoserine: Ser-78 and Ser-93. A compositionally biased stretch (basic and acidic residues) spans 81–93 (GETKAEEAQKTES).

This sequence belongs to the HMGN family. As to quaternary structure, interacts with the ligand binding domain of the thyroid receptor (TR) (in vitro). Requires the presence of thyroid hormone for its interaction. Interacts with transcriptional regulator SEHBP. Interacts with nucleosomes.

It localises to the nucleus. Its function is as follows. Binds to nucleosomes, regulating chromatin structure and consequently, chromatin-dependent processes such as transcription, DNA replication and DNA repair. Affects both insulin and glucagon levels and modulates the expression of pancreatic genes involved in insulin secretion. Regulates the expression of the glucose transporter SLC2A2 by binding specifically to its promoter region and recruiting PDX1 and additional transcription factors. Regulates the expression of SLC6A9, a glycine transporter which regulates the glycine concentration in synaptic junctions in the central nervous system, by binding to its transcription start site. May play a role in ocular development and astrocyte function. This Pongo abelii (Sumatran orangutan) protein is High mobility group nucleosome-binding domain-containing protein 3 (HMGN3).